Here is a 171-residue protein sequence, read N- to C-terminus: 3-hydroxydecanoyl-[acyl-carrier-protein] dehydratase (171 aa).

His-70 is an active-site residue.

The protein belongs to the thioester dehydratase family. FabA subfamily. In terms of assembly, homodimer.

Its subcellular location is the cytoplasm. The catalysed reaction is a (3R)-hydroxyacyl-[ACP] = a (2E)-enoyl-[ACP] + H2O. It catalyses the reaction (3R)-hydroxydecanoyl-[ACP] = (2E)-decenoyl-[ACP] + H2O. The enzyme catalyses (2E)-decenoyl-[ACP] = (3Z)-decenoyl-[ACP]. It participates in lipid metabolism; fatty acid biosynthesis. Necessary for the introduction of cis unsaturation into fatty acids. Catalyzes the dehydration of (3R)-3-hydroxydecanoyl-ACP to E-(2)-decenoyl-ACP and then its isomerization to Z-(3)-decenoyl-ACP. Can catalyze the dehydratase reaction for beta-hydroxyacyl-ACPs with saturated chain lengths up to 16:0, being most active on intermediate chain length. In Ectopseudomonas mendocina (strain ymp) (Pseudomonas mendocina), this protein is 3-hydroxydecanoyl-[acyl-carrier-protein] dehydratase.